Here is a 169-residue protein sequence, read N- to C-terminus: Interleukin-2 (169 aa).

The signal sequence occupies residues 1–20; sequence MYSMQLASCVTLTLVLLVNS. Thr-23 carries an O-linked (GalNAc...) threonine glycan. Residues Cys-92 and Cys-140 are joined by a disulfide bond.

It belongs to the IL-2 family. Produced by immune cells including dendritic cells. In contrast, macrophages do not produce IL2 upon bacterial stimulation.

The protein localises to the secreted. In terms of biological role, cytokine produced by activated CD4-positive helper T-cells and to a lesser extend activated CD8-positive T-cells and natural killer (NK) cells that plays pivotal roles in the immune response and tolerance. Binds to a receptor complex composed of either the high-affinity trimeric IL-2R (IL2RA/CD25, IL2RB/CD122 and IL2RG/CD132) or the low-affinity dimeric IL-2R (IL2RB and IL2RG). Interaction with the receptor leads to oligomerization and conformation changes in the IL-2R subunits resulting in downstream signaling starting with phosphorylation of JAK1 and JAK3. In turn, JAK1 and JAK3 phosphorylate the receptor to form a docking site leading to the phosphorylation of several substrates including STAT5. This process leads to activation of several pathways including STAT, phosphoinositide-3-kinase/PI3K and mitogen-activated protein kinase/MAPK pathways. Functions as a T-cell growth factor and can increase NK-cell cytolytic activity as well. Promotes strong proliferation of activated B-cells and subsequently immunoglobulin production. Plays a pivotal role in regulating the adaptive immune system by controlling the survival and proliferation of regulatory T-cells, which are required for the maintenance of immune tolerance. Moreover, participates in the differentiation and homeostasis of effector T-cell subsets, including Th1, Th2, Th17 as well as memory CD8-positive T-cells. The polypeptide is Interleukin-2 (Il2) (Mus musculus (Mouse)).